The primary structure comprises 233 residues: Isoprenyl transferase (233 aa).

Asp12 is an active-site residue. A Mg(2+)-binding site is contributed by Asp12. Substrate is bound by residues 13–16 (GNGR), Trp17, Arg25, His29, and 57–59 (STE). Residue Asn60 is the Proton acceptor of the active site. Substrate is bound by residues Trp61, Arg63, Arg178, and 184 to 186 (RLS). Residue Glu197 coordinates Mg(2+).

It belongs to the UPP synthase family. As to quaternary structure, homodimer. It depends on Mg(2+) as a cofactor.

In terms of biological role, catalyzes the condensation of isopentenyl diphosphate (IPP) with allylic pyrophosphates generating different type of terpenoids. The polypeptide is Isoprenyl transferase (Thermotoga maritima (strain ATCC 43589 / DSM 3109 / JCM 10099 / NBRC 100826 / MSB8)).